The chain runs to 327 residues: Phenylalanine--tRNA ligase alpha subunit (327 aa).

Residue Glu-252 coordinates Mg(2+).

Belongs to the class-II aminoacyl-tRNA synthetase family. Phe-tRNA synthetase alpha subunit type 1 subfamily. Tetramer of two alpha and two beta subunits. It depends on Mg(2+) as a cofactor.

Its subcellular location is the cytoplasm. It carries out the reaction tRNA(Phe) + L-phenylalanine + ATP = L-phenylalanyl-tRNA(Phe) + AMP + diphosphate + H(+). The sequence is that of Phenylalanine--tRNA ligase alpha subunit from Hamiltonella defensa subsp. Acyrthosiphon pisum (strain 5AT).